We begin with the raw amino-acid sequence, 292 residues long: Phosphoribosylaminoimidazole-succinocarboxamide synthase (292 aa).

The protein belongs to the SAICAR synthetase family.

It carries out the reaction 5-amino-1-(5-phospho-D-ribosyl)imidazole-4-carboxylate + L-aspartate + ATP = (2S)-2-[5-amino-1-(5-phospho-beta-D-ribosyl)imidazole-4-carboxamido]succinate + ADP + phosphate + 2 H(+). Its pathway is purine metabolism; IMP biosynthesis via de novo pathway; 5-amino-1-(5-phospho-D-ribosyl)imidazole-4-carboxamide from 5-amino-1-(5-phospho-D-ribosyl)imidazole-4-carboxylate: step 1/2. The protein is Phosphoribosylaminoimidazole-succinocarboxamide synthase of Elusimicrobium minutum (strain Pei191).